Consider the following 274-residue polypeptide: MAIKTYKPTSPGRRAQTCSTFEEITACKPERSLVENLKKSGGRNSNGRITSRNVGGGHKQKYRIIDFRRDKTEIPAKVATIEYDPCRSARIALLNYADGEKRYILAPLSLKVGDTVISSEQADIKPGNALPIRCIPLGTIIHNIELKIGKGAQLARSAGTFAQLMAKEGKYGQVKLPSGEVRMILMDCKATIGQVGNVDHENVSIGKAGRSRWLGVRPHVRGVAMNPVDHPHGGGEGRTSGGRHPVTPWGIPTKGYKTRTNKRSTPFIVKKRTK.

The interval alanine 224–arginine 259 is disordered.

This sequence belongs to the universal ribosomal protein uL2 family. In terms of assembly, part of the 50S ribosomal subunit. Forms a bridge to the 30S subunit in the 70S ribosome.

Functionally, one of the primary rRNA binding proteins. Required for association of the 30S and 50S subunits to form the 70S ribosome, for tRNA binding and peptide bond formation. It has been suggested to have peptidyltransferase activity; this is somewhat controversial. Makes several contacts with the 16S rRNA in the 70S ribosome. The sequence is that of Large ribosomal subunit protein uL2 from Geobacter sp. (strain M21).